The chain runs to 315 residues: Methionyl-tRNA formyltransferase (315 aa).

113-116 (SLLP) provides a ligand contact to (6S)-5,6,7,8-tetrahydrofolate.

The protein belongs to the Fmt family.

The enzyme catalyses L-methionyl-tRNA(fMet) + (6R)-10-formyltetrahydrofolate = N-formyl-L-methionyl-tRNA(fMet) + (6S)-5,6,7,8-tetrahydrofolate + H(+). In terms of biological role, attaches a formyl group to the free amino group of methionyl-tRNA(fMet). The formyl group appears to play a dual role in the initiator identity of N-formylmethionyl-tRNA by promoting its recognition by IF2 and preventing the misappropriation of this tRNA by the elongation apparatus. The protein is Methionyl-tRNA formyltransferase of Erwinia tasmaniensis (strain DSM 17950 / CFBP 7177 / CIP 109463 / NCPPB 4357 / Et1/99).